The primary structure comprises 148 residues: Lysozyme C (148 aa).

A signal peptide spans 1 to 18 (MKAVIILGLVLLSVTVQG). Residues 19 to 148 (KIFERCELAR…VSQYVQGCGV (130 aa)) enclose the C-type lysozyme domain. Cystine bridges form between cysteine 24–cysteine 146, cysteine 48–cysteine 134, cysteine 83–cysteine 99, and cysteine 95–cysteine 113. Active-site residues include glutamate 53 and aspartate 71.

Belongs to the glycosyl hydrolase 22 family. Monomer.

Its subcellular location is the secreted. It catalyses the reaction Hydrolysis of (1-&gt;4)-beta-linkages between N-acetylmuramic acid and N-acetyl-D-glucosamine residues in a peptidoglycan and between N-acetyl-D-glucosamine residues in chitodextrins.. In terms of biological role, lysozymes have primarily a bacteriolytic function; those in tissues and body fluids are associated with the monocyte-macrophage system and enhance the activity of immunoagents. This chain is Lysozyme C (LYZ), found in Papio anubis (Olive baboon).